A 153-amino-acid polypeptide reads, in one-letter code: Large ribosomal subunit protein uL22 (153 aa).

Residues 125–153 (EPKEARQARKKAKSGRPAAAAKSETEKGA) form a disordered region.

The protein belongs to the universal ribosomal protein uL22 family. As to quaternary structure, part of the 50S ribosomal subunit.

Its function is as follows. This protein binds specifically to 23S rRNA; its binding is stimulated by other ribosomal proteins, e.g. L4, L17, and L20. It is important during the early stages of 50S assembly. It makes multiple contacts with different domains of the 23S rRNA in the assembled 50S subunit and ribosome. The globular domain of the protein is located near the polypeptide exit tunnel on the outside of the subunit, while an extended beta-hairpin is found that lines the wall of the exit tunnel in the center of the 70S ribosome. The sequence is that of Large ribosomal subunit protein uL22 from Cutibacterium acnes (strain DSM 16379 / KPA171202) (Propionibacterium acnes).